The chain runs to 353 residues: Cellulose-complementing protein (353 aa).

Disordered regions lie at residues 1-21, 75-94, and 117-337; these read MSAS…PQDF, PQIA…PAIV, and AVPA…SPRP. A compositionally biased stretch (pro residues) spans 80 to 91; the sequence is APPPPPVVPDPP. Composition is skewed to low complexity over residues 117–132 and 142–164; these read AVPA…VQAA and IAEQ…VAAA. Pro residues predominate over residues 165–175; the sequence is PVPPDPAPVTP. Polar residues-rich tracts occupy residues 196–226 and 278–304; these read QVRT…SSIS and STRS…QASR.

This is Cellulose-complementing protein (ccpAX) from Komagataeibacter xylinus (Gluconacetobacter xylinus).